The primary structure comprises 63 residues: Large ribosomal subunit protein uL29 (63 aa).

It belongs to the universal ribosomal protein uL29 family.

The sequence is that of Large ribosomal subunit protein uL29 from Aliivibrio fischeri (strain ATCC 700601 / ES114) (Vibrio fischeri).